A 954-amino-acid chain; its full sequence is Alpha-xylosidase BoGH31A (954 aa).

A signal peptide spans 1–20; the sequence is MIMNMKNIFYCLLPGLLLGA. C21 is lipidated: N-palmitoyl cysteine. Residue C21 is the site of S-diacylglycerol cysteine attachment. Residues 227–366 enclose the PA14 domain; it reads TGQEGALTGT…NPEEQGKQSW (140 aa). Catalysis depends on residues D553 and E556. The Proton donor role is filled by D630.

The protein belongs to the glycosyl hydrolase 31 family.

The protein resides in the cell inner membrane. It carries out the reaction Hydrolysis of terminal, non-reducing alpha-D-xylose residues with release of alpha-D-xylose.. The protein operates within glucan metabolism; xyloglucan degradation. Functionally, catalyzes the liberation of alpha-xylose from the non-reducing terminal glucose of xyloglucan oligosaccharides in xyloglucan degradation, converting the 'X' to 'G' units. The protein is Alpha-xylosidase BoGH31A of Bacteroides ovatus (strain ATCC 8483 / DSM 1896 / JCM 5824 / BCRC 10623 / CCUG 4943 / NCTC 11153).